The sequence spans 348 residues: D-alanine--D-alanine ligase (348 aa).

In terms of domain architecture, ATP-grasp spans 132 to 334; sequence KRVLESIGIP…YPDLIEELVT (203 aa). 162-217 contacts ATP; the sequence is LARLTFPIFVKPANMGSSVGISKAQTKVELRKAIQLALTYDSRVLIEQGVIAREIE. Mg(2+)-binding residues include aspartate 288, glutamate 301, and asparagine 303.

Belongs to the D-alanine--D-alanine ligase family. It depends on Mg(2+) as a cofactor. Mn(2+) serves as cofactor.

The protein localises to the cytoplasm. The catalysed reaction is 2 D-alanine + ATP = D-alanyl-D-alanine + ADP + phosphate + H(+). It participates in cell wall biogenesis; peptidoglycan biosynthesis. Its function is as follows. Cell wall formation. The protein is D-alanine--D-alanine ligase of Streptococcus pyogenes serotype M4 (strain MGAS10750).